The primary structure comprises 346 residues: Tyrosine--tRNA ligase (346 aa).

The short motif at 47 to 56 is the 'HIGH' region element; the sequence is PSGRIHIAQA. The 'KMSKS' region motif lies at 230-234; the sequence is KMSKS. ATP is bound at residue lysine 233.

Belongs to the class-I aminoacyl-tRNA synthetase family. In terms of assembly, homodimer.

It catalyses the reaction tRNA(Tyr) + L-tyrosine + ATP = L-tyrosyl-tRNA(Tyr) + AMP + diphosphate + H(+). Catalyzes the attachment of tyrosine to tRNA(Tyr) in a two-step reaction: tyrosine is first activated by ATP to form Tyr-AMP and then transferred to the acceptor end of tRNA(Tyr). In Acanthamoeba polyphaga (Amoeba), this protein is Tyrosine--tRNA ligase (YARS).